We begin with the raw amino-acid sequence, 303 residues long: Leukocyte immunoglobulin-like receptor subfamily B member 4B (303 aa).

An N-terminal signal peptide occupies residues 1–23 (MIAMLTVLLYLALILEPRTAVQA). Residues 24 to 238 (GHLPKPIIWA…TEDGLETYQK (215 aa)) lie on the Extracellular side of the membrane. Ig-like C2-type domains lie at 42 to 123 (YTSV…AYEN) and 124 to 212 (PSLS…KPSN). Cys-49 and Cys-98 are disulfide-bonded. N-linked (GlcNAc...) asparagine glycosylation is found at Asn-79, Asn-133, and Asn-191. A disulfide bridge links Cys-144 with Cys-196. Residues 239 to 260 (ILIGVLVSFLLLFFLLLFLILI) traverse the membrane as a helical segment. Topologically, residues 261-303 (GYQCRHKNKANASVKNTQSEDNAELNSWNPQNEDPPRELCTPR) are cytoplasmic. The segment covering 275 to 292 (KNTQSEDNAELNSWNPQN) has biased composition (polar residues). The interval 275-303 (KNTQSEDNAELNSWNPQNEDPPRELCTPR) is disordered.

In terms of assembly, monomer and homodimer. As to expression, expressed on mast cells (at protein level). Also expressed at much lower levels on natural killer cells (at protein level).

It is found in the cell membrane. In terms of biological role, plays a role in mast cell activation. This chain is Leukocyte immunoglobulin-like receptor subfamily B member 4B, found in Mus musculus (Mouse).